A 320-amino-acid polypeptide reads, in one-letter code: MVGYDPKPDGRNNTKLQVAVAGSVSGLVTRALISPFDVIKIRFQLQHERLSRRDPNAKYHGIFQASRQILQEEGLTAFWKGHIPAQILSIGYGAVQFLSFEMLTELVHRGSVYDAREFSVHFVCGGLAACTATLTVHPVDVLRTRFAAQGEPKVYNTLRHAVGTMYRSEGPQVFYKGLAPTLIAIFPYAGLQFSCYSSLKHLYKWAMPAEGKKNENLQNLLCGSGAGVISKTLTYPLDLFKKRLQVGGFEHARAAFGQVRRYKGLMDCAKQVLQKEGALGFFKGLSPSLLKAALSTGFMFFWYEFFCNVFHCMNRTASQR.

3 Solcar repeats span residues 13-106 (NTKL…LTEL), 116-202 (REFS…LKHL), and 214-309 (NENL…FCNV). Residues 19 to 39 (AVAGSVSGLVTRALISPFDVI) traverse the membrane as a helical segment. At Ser51 the chain carries Phosphoserine. Helical transmembrane passes span 87 to 107 (ILSIGYGAVQFLSFEMLTELV), 122 to 142 (FVCGGLAACTATLTVHPVDVL), 173 to 193 (VFYKGLAPTLIAIFPYAGLQF), and 220 to 240 (LLCGSGAGVISKTLTYPLDLF). The Substrate recognition motif lies at 241-246 (KKRLQV). Residues 293-313 (ALSTGFMFFWYEFFCNVFHCM) form a helical membrane-spanning segment.

The protein belongs to the mitochondrial carrier (TC 2.A.29) family.

Its subcellular location is the mitochondrion membrane. The enzyme catalyses thiamine phosphate(out) + thiamine diphosphate(in) = thiamine phosphate(in) + thiamine diphosphate(out). Its function is as follows. Mitochondrial transporter mediating uptake of thiamine diphosphate into mitochondria. It is not clear if the antiporter activity is affected by the membrane potential or by the proton electrochemical gradient. This is Mitochondrial thiamine pyrophosphate carrier (SLC25A19) from Macaca fascicularis (Crab-eating macaque).